We begin with the raw amino-acid sequence, 290 residues long: 33 kDa chaperonin (290 aa).

2 cysteine pairs are disulfide-bonded: C235–C237 and C268–C271.

Belongs to the HSP33 family. Under oxidizing conditions two disulfide bonds are formed involving the reactive cysteines. Under reducing conditions zinc is bound to the reactive cysteines and the protein is inactive.

Its subcellular location is the cytoplasm. Its function is as follows. Redox regulated molecular chaperone. Protects both thermally unfolding and oxidatively damaged proteins from irreversible aggregation. Plays an important role in the bacterial defense system toward oxidative stress. In Streptococcus pyogenes serotype M49 (strain NZ131), this protein is 33 kDa chaperonin.